The primary structure comprises 1038 residues: Zinc finger protein 628 (1038 aa).

Residues 1 to 31 form a disordered region; sequence MAGSHVDMAPASTTEGTGEKPGPTAPAPTPA. Low complexity predominate over residues 13-22; the sequence is TTEGTGEKPG. C2H2-type zinc fingers lie at residues 34 to 56, 62 to 84, 90 to 112, 118 to 140, 146 to 168, and 174 to 196; these read YECG…QRTH, YKCP…QRGH, YQCP…RSVH, FTCG…LRQH, YPCP…RHVH, and YTCG…QRVH. The residue at position 197 (Thr197) is a Phosphothreonine. The segment at 202-224 adopts a C2H2-type 7 zinc-finger fold; sequence FRCPLCPKTFTHSSNLLLHHRTH. Disordered stretches follow at residues 220–242 and 254–273; these read HHRT…ETSR and LQPR…PPVV. Composition is skewed to pro residues over residues 227–237 and 257–273; these read APGPAPAPAPP and RSPP…PPVV. 7 C2H2-type zinc fingers span residues 346 to 368, 376 to 398, 446 to 468, 474 to 496, 502 to 524, 530 to 552, and 558 to 580; these read FACL…QHSH, FRCG…QQCH, YKCA…LRDH, YQCG…QRVH, FTCG…LRLH, YACT…RHVH, and HSCS…QRVH. Thr581 is subject to Phosphothreonine. 2 C2H2-type zinc fingers span residues 586–608 and 614–636; these read FRCP…QRTH and FACP…LRTH. Disordered regions lie at residues 637–661 and 717–763; these read TPAT…LAAA and PSSV…AGQG. Residues 723–733 are compositionally biased toward pro residues; that stretch reads PTPPPPPPPPK. Positions 734 to 756 are enriched in low complexity; that stretch reads VILLPPASAGGPGSGAARPGPRS. Tandem repeats lie at residues 811–821, 822–832, 833–843, and 844–854. A 4 X 11 AA tandem repeats of VQLQP-[AL]-[QT]-[EG]-[VQ]-[ATV]-[ST] region spans residues 811–854; sequence VQLQPAQEVATVQLQPAQEVTTVQLQPAQEVTTVQLQPLTGQVS. The tract at residues 922 to 1038 is interaction with TAF4B; sequence DGEQTRLCVQ…LPAVQLVHTF (117 aa).

In terms of assembly, interacts with TAF4B. Expressed widely in testis, in both germline and somatic cells. Seems to have particularly strong expression in meiotic spermatocytes, postmeiotic round spermatids and Sertoli cells. Not detected in elongating spermatids or mature sperm (at protein level). Expressed in testis, ovary, spleen, lung, brain, liver and kidney. Expressed in D3 embryonic stem cells and F9 embryonal carcinoma cells.

It localises to the nucleus. In terms of biological role, transcriptional activator. Binds DNA on GT-box consensus sequence 5'-TTGGTT-3'. Plays a role in spermiogenesis. In Mus musculus (Mouse), this protein is Zinc finger protein 628.